The following is a 304-amino-acid chain: Aspartate carbamoyltransferase catalytic subunit (304 aa).

Carbamoyl phosphate is bound by residues Arg-49 and Thr-50. Lys-77 lines the L-aspartate pocket. Arg-99, His-127, and Gln-130 together coordinate carbamoyl phosphate. L-aspartate contacts are provided by Arg-160 and Arg-211. Positions 250 and 251 each coordinate carbamoyl phosphate.

Belongs to the aspartate/ornithine carbamoyltransferase superfamily. ATCase family. As to quaternary structure, heterododecamer (2C3:3R2) of six catalytic PyrB chains organized as two trimers (C3), and six regulatory PyrI chains organized as three dimers (R2).

It carries out the reaction carbamoyl phosphate + L-aspartate = N-carbamoyl-L-aspartate + phosphate + H(+). The protein operates within pyrimidine metabolism; UMP biosynthesis via de novo pathway; (S)-dihydroorotate from bicarbonate: step 2/3. Functionally, catalyzes the condensation of carbamoyl phosphate and aspartate to form carbamoyl aspartate and inorganic phosphate, the committed step in the de novo pyrimidine nucleotide biosynthesis pathway. The polypeptide is Aspartate carbamoyltransferase catalytic subunit (Bacillus velezensis (strain DSM 23117 / BGSC 10A6 / LMG 26770 / FZB42) (Bacillus amyloliquefaciens subsp. plantarum)).